Here is a 172-residue protein sequence, read N- to C-terminus: MSQQQQFKYIVRLFGQDVDGTMKVPYALAMVKGIGYNTARAIVFKLGLDKDRRLGELSDEDIKKIENYLTDKKILEVPNWMYNRRKDYESGIDMHLVTSDLIFYVRNDIEREKKIKSWRGVRHSLGLKVRGQRTRTTGRTGVTVGVRRSKAAQAAQQQQKAQASSGGEKKQG.

The interval 131–172 (GQRTRTTGRTGVTVGVRRSKAAQAAQQQQKAQASSGGEKKQG) is disordered. Low complexity predominate over residues 134-163 (TRTTGRTGVTVGVRRSKAAQAAQQQQKAQA).

This sequence belongs to the universal ribosomal protein uS13 family. In terms of assembly, part of the 30S ribosomal subunit. Forms a loose heterodimer with protein S19. Forms two bridges to the 50S subunit in the 70S ribosome.

Its function is as follows. Located at the top of the head of the 30S subunit, it contacts several helices of the 16S rRNA. In the 70S ribosome it contacts the 23S rRNA (bridge B1a) and protein L5 of the 50S subunit (bridge B1b), connecting the 2 subunits; these bridges are implicated in subunit movement. The protein is Small ribosomal subunit protein uS13 of Sulfurisphaera tokodaii (strain DSM 16993 / JCM 10545 / NBRC 100140 / 7) (Sulfolobus tokodaii).